The following is a 335-amino-acid chain: G-protein coupled receptor 157 (335 aa).

Over 1-15 the chain is Extracellular; sequence MQPSPPPTELVPSER. The helical transmembrane segment at 16-36 threads the bilayer; that stretch reads AVVLLSCALSALGSGLLVATH. At 37–48 the chain is on the cytoplasmic side; it reads ALWPDLRSRARR. The chain crosses the membrane as a helical span at residues 49-69; it reads LLLFLSLADLLSAASYFYGVL. Topologically, residues 70–87 are extracellular; the sequence is QNFAGPSWDCVLQGALST. Residues 88–108 traverse the membrane as a helical segment; the sequence is FANTSSFFWTVAIALYLYLSI. The Cytoplasmic portion of the chain corresponds to 109 to 119; sequence VRAARGPRTDR. Residues 120 to 140 traverse the membrane as a helical segment; the sequence is LLWAFHVVSWGVPLVITVAAV. Residues 141–166 are Extracellular-facing; the sequence is ALKKIGYDASDVSVGWCWIDLEAKDH. Residues 167 to 187 traverse the membrane as a helical segment; it reads VLWMLLTGKLWEMLAYVLLPL. The Cytoplasmic segment spans residues 188–226; sequence LYLLVRKHINRAHTALSEYRPILSQEHRLLRHSSMADKK. The helical transmembrane segment at 227-247 threads the bilayer; the sequence is LVLIPLIFIGLRVWSTVRFVL. Residues 248–258 lie on the Extracellular side of the membrane; sequence TLCGSPAVQTP. Residues 259 to 279 traverse the membrane as a helical segment; sequence VLVVLHGIGNTFQGGANCIMF. Residues 280–335 lie on the Cytoplasmic side of the membrane; the sequence is VLCTRAVRTRLFSLCCCCCSSQPPTKSPAGTPKAPAPSKPGESQESQGTPGELPST. A disordered region spans residues 300-335; the sequence is SQPPTKSPAGTPKAPAPSKPGESQESQGTPGELPST. Polar residues predominate over residues 320–335; that stretch reads GESQESQGTPGELPST.

This sequence belongs to the G-protein coupled receptor 2 family.

It is found in the cell projection. The protein localises to the cilium membrane. Its function is as follows. Orphan receptor that promotes neuronal differentiation of radial glial progenitors (RGPs). The activity of this receptor is mediated by a G(q)-protein that activates a phosphatidylinositol-calcium second messenger. This Homo sapiens (Human) protein is G-protein coupled receptor 157 (GPR157).